Here is a 120-residue protein sequence, read N- to C-terminus: Ribonuclease P protein component (120 aa).

It belongs to the RnpA family. In terms of assembly, consists of a catalytic RNA component (M1 or rnpB) and a protein subunit.

It catalyses the reaction Endonucleolytic cleavage of RNA, removing 5'-extranucleotides from tRNA precursor.. Its function is as follows. RNaseP catalyzes the removal of the 5'-leader sequence from pre-tRNA to produce the mature 5'-terminus. It can also cleave other RNA substrates such as 4.5S RNA. The protein component plays an auxiliary but essential role in vivo by binding to the 5'-leader sequence and broadening the substrate specificity of the ribozyme. This chain is Ribonuclease P protein component, found in Chlamydia trachomatis serovar D (strain ATCC VR-885 / DSM 19411 / UW-3/Cx).